Here is a 107-residue protein sequence, read N- to C-terminus: Probable monothiol glutaredoxin 2 (107 aa).

The region spanning 7-107 (FKFIENEIKN…LEKMLKAYTR (101 aa)) is the Glutaredoxin domain. K24 lines the glutathione pocket. Residue C32 coordinates [2Fe-2S] cluster. Residues R61, F73, and 86-87 (CD) contribute to the glutathione site.

It belongs to the glutaredoxin family. Monothiol subfamily.

The polypeptide is Probable monothiol glutaredoxin 2 (grxC2) (Rickettsia conorii (strain ATCC VR-613 / Malish 7)).